Here is a 77-residue protein sequence, read N- to C-terminus: uncharacterized protein (77 aa).

2 consecutive 4Fe-4S ferredoxin-type domains span residues 3-32 (VEII…WTKD) and 36-65 (KYYA…IKVV). 8 residues coordinate [4Fe-4S] cluster: Cys12, Cys15, Cys18, Cys22, Cys45, Cys48, Cys51, and Cys55.

[4Fe-4S] cluster serves as cofactor.

In terms of biological role, ferredoxins are iron-sulfur proteins that transfer electrons probably in the CO-dehydrogenase complex. This is an uncharacterized protein from Methanocaldococcus jannaschii (strain ATCC 43067 / DSM 2661 / JAL-1 / JCM 10045 / NBRC 100440) (Methanococcus jannaschii).